Consider the following 214-residue polypeptide: Large ribosomal subunit protein uL3 (214 aa).

Over residues 130–151 (FSSNRASHGNSRSHNTPGSIGQ) the composition is skewed to polar residues. The segment at 130-163 (FSSNRASHGNSRSHNTPGSIGQAQDPGRVFPGKR) is disordered. At glutamine 153 the chain carries N5-methylglutamine.

The protein belongs to the universal ribosomal protein uL3 family. As to quaternary structure, part of the 50S ribosomal subunit. Forms a cluster with proteins L14 and L19. Methylated by PrmB.

In terms of biological role, one of the primary rRNA binding proteins, it binds directly near the 3'-end of the 23S rRNA, where it nucleates assembly of the 50S subunit. The protein is Large ribosomal subunit protein uL3 of Chromobacterium violaceum (strain ATCC 12472 / DSM 30191 / JCM 1249 / CCUG 213 / NBRC 12614 / NCIMB 9131 / NCTC 9757 / MK).